A 31-amino-acid chain; its full sequence is Photosystem II reaction center protein T (31 aa).

The chain crosses the membrane as a helical span at residues 3–23 (ALVYTFLLVGTLGIIFFSIFF).

It belongs to the PsbT family. As to quaternary structure, PSII is composed of 1 copy each of membrane proteins PsbA, PsbB, PsbC, PsbD, PsbE, PsbF, PsbH, PsbI, PsbJ, PsbK, PsbL, PsbM, PsbT, PsbY, PsbZ, Psb30/Ycf12, at least 3 peripheral proteins of the oxygen-evolving complex and a large number of cofactors. It forms dimeric complexes.

The protein localises to the plastid. It is found in the chloroplast thylakoid membrane. In terms of biological role, found at the monomer-monomer interface of the photosystem II (PS II) dimer, plays a role in assembly and dimerization of PSII. PSII is a light-driven water plastoquinone oxidoreductase, using light energy to abstract electrons from H(2)O, generating a proton gradient subsequently used for ATP formation. In Tupiella akineta (Green alga), this protein is Photosystem II reaction center protein T.